Here is a 424-residue protein sequence, read N- to C-terminus: Serine--tRNA ligase (424 aa).

Position 233-235 (233-235 (TAE)) interacts with L-serine. Residue 264-266 (RRE) participates in ATP binding. L-serine is bound at residue E287. 351-354 (EISS) contributes to the ATP binding site. S386 serves as a coordination point for L-serine.

Belongs to the class-II aminoacyl-tRNA synthetase family. Type-1 seryl-tRNA synthetase subfamily. Homodimer. The tRNA molecule binds across the dimer.

It is found in the cytoplasm. It carries out the reaction tRNA(Ser) + L-serine + ATP = L-seryl-tRNA(Ser) + AMP + diphosphate + H(+). It catalyses the reaction tRNA(Sec) + L-serine + ATP = L-seryl-tRNA(Sec) + AMP + diphosphate + H(+). Its pathway is aminoacyl-tRNA biosynthesis; selenocysteinyl-tRNA(Sec) biosynthesis; L-seryl-tRNA(Sec) from L-serine and tRNA(Sec): step 1/1. Its function is as follows. Catalyzes the attachment of serine to tRNA(Ser). Is also able to aminoacylate tRNA(Sec) with serine, to form the misacylated tRNA L-seryl-tRNA(Sec), which will be further converted into selenocysteinyl-tRNA(Sec). This Petrotoga mobilis (strain DSM 10674 / SJ95) protein is Serine--tRNA ligase.